Reading from the N-terminus, the 182-residue chain is Ribosome maturation factor RimP (182 aa).

Belongs to the RimP family.

It localises to the cytoplasm. In terms of biological role, required for maturation of 30S ribosomal subunits. This chain is Ribosome maturation factor RimP, found in Chloroherpeton thalassium (strain ATCC 35110 / GB-78).